A 257-amino-acid polypeptide reads, in one-letter code: Sulfur carrier protein FdhD (257 aa).

The active-site Cysteine persulfide intermediate is the Cys105.

It belongs to the FdhD family.

It is found in the cytoplasm. Required for formate dehydrogenase (FDH) activity. Acts as a sulfur carrier protein that transfers sulfur from IscS to the molybdenum cofactor prior to its insertion into FDH. This is Sulfur carrier protein FdhD from Saccharolobus solfataricus (strain ATCC 35092 / DSM 1617 / JCM 11322 / P2) (Sulfolobus solfataricus).